Consider the following 517-residue polypeptide: Ovoinhibitor (517 aa).

7 Kazal-like domains span residues 67-132 (FGIE…ECRP), 133-197 (KHVT…ECKL), 198-263 (EIGS…KCRQ), 264-329 (EIPE…RCKE), 330-394 (RSTP…RCRE), 395-460 (EVPE…RCEE), and 461-517 (DITK…MAAC). Asn72 carries an N-linked (GlcNAc...) asparagine glycan. Cystine bridges form between Cys73–Cys112, Cys90–Cys109, Cys98–Cys130, Cys139–Cys177, Cys155–Cys174, Cys163–Cys195, Cys204–Cys243, Cys221–Cys240, Cys229–Cys261, Cys270–Cys309, Cys287–Cys306, Cys295–Cys327, Cys336–Cys374, Cys352–Cys371, Cys360–Cys392, Cys401–Cys440, Cys418–Cys437, Cys426–Cys458, Cys467–Cys499, Cys477–Cys496, and Cys485–Cys517. Asn186 carries an N-linked (GlcNAc...) asparagine glycan. Asn506 carries an N-linked (GlcNAc...) asparagine glycan.

Post-translationally, glycosylated. Expressed in oviduct (at protein level). Expressed in egg white (at protein level). Expressed in egg yolk plasma of non-fertilized eggs (at protein level). Expressed in the magnum of the oviduct (at protein level). Expressed in oviduct. Expressed in liver. Expressed in the cortico-medullary border region of the bursa of Fabricius by the bursal secretory dendritic-like cells. Highly expressed in the magnum of the oviduct, and at a lower level in uterus. Weakly expressed in white isthmus and very weakly in infundibulum. Not expressed in duodenum and kidney.

It localises to the secreted. Serine protease inhibitor involved in antimicrobial egg defense preventing contamination of table eggs (non-fertilized eggs) and protecting the chick embryo (fertilized eggs). Inhibits trypsin, chymotrypsin, elastase, subtilisin and a proteinase of fungus Aspergillus oryzae. Inhibits calcium-activated potassium channels KCNMA1 (bovine) and slo (Drosophila). Has antibacterial activity against B.thuringiensis LMSA 3.06.004, but not against S.aureus CIP 103 811, P.aeruginosa PAO1, B.cereus ATCC6464 or B.subtilis ATCC 6633. This is Ovoinhibitor from Gallus gallus (Chicken).